Here is a 308-residue protein sequence, read N- to C-terminus: Isochorismatase domain-containing protein 1 (308 aa).

It belongs to the isochorismatase family.

This is Isochorismatase domain-containing protein 1 (isoc1) from Xenopus tropicalis (Western clawed frog).